A 333-amino-acid chain; its full sequence is Prenyltransferase stbC (333 aa).

A run of 8 helical transmembrane segments spans residues 74–94 (VAFQ…AGCA), 125–145 (ANIF…PLPA), 147–164 (CQRL…YPFC), 173–193 (VILG…AGLP), 201–221 (VPTI…DVVY), 247–267 (ILLT…GVLV), 272–292 (YFFV…IGGI), and 304–324 (SGWF…IEYL).

This sequence belongs to the UbiA prenyltransferase family.

The protein resides in the membrane. The catalysed reaction is orsellinate + (2E,6E)-farnesyl diphosphate = ilicicolinate B + diphosphate. The protein operates within secondary metabolite biosynthesis; terpenoid biosynthesis. Its function is as follows. Prenyltransferase; part of the cluster that mediates the biosynthesis of LL-Z1272-beta, also known as ilicicolin B, a prenylated aryl-aldehyde produced by several fungi and that serves as a key pathway intermediate for many fungal meroterpenoids. The first step in the pathway is performed by the non-reducing polyketide synthase stbA that produces orsellinic acid by condensing acetyl-CoA with 3 malonyl-CoA units. The prenyltransferase stbC then prenylates orsenilic acid into grifolic acid. Finally, grifolic acid is reduced to ilicicolin B by the NRPS-like protein stbB. This Stachybotrys bisbyi (Hyalostachybotrys bisbyi) protein is Prenyltransferase stbC.